The chain runs to 431 residues: uncharacterized protein (431 aa).

12 helical membrane passes run 33–53, 63–83, 111–131, 143–163, 175–195, 197–217, 241–261, 273–293, 318–338, 358–378, 381–401, and 407–427; these read VARVGTAAAVTALCGYAVIYL, FSVFGVFWGAFGLVTGAANGL, VSGMVGLGSLVVIAGSSPLWS, VALLSIGLAGFCLHATLLGML, LMVADAVIRVVVAAATFVIGW, LVGFIWATVAGSVAWLIMLMT, AHSIIAAGASAILVMGFPVLL, GVVILAVTLTRAPLLVPLTAM, LIGGVGAVGMLAAGVVGPWIM, AAAVAIAMLTLTGAAAVAAAL, AYSLGWVGATVGSGLLLLLPL, and TVVALLCGPLVGIGVHLVALA.

To M.tuberculosis Rv1510 and M.bovis Mb3654.

It localises to the cell membrane. This is an uncharacterized protein from Mycobacterium tuberculosis (strain ATCC 25618 / H37Rv).